Reading from the N-terminus, the 251-residue chain is Cold shock-induced protein TIR2 (251 aa).

A signal peptide spans 1–18 (MAYIKIALLAAIAALASA). The stretch at 207–225 (ASAISQISDGQVQATSTVS) is one PIR1/2/3 repeat. The GPI-anchor amidated glycine moiety is linked to residue glycine 231. Residues 232–251 (AAKAVIGMGAGVMAAAAMLL) constitute a propeptide, removed in mature form.

It belongs to the SRP1/TIP1 family. In terms of processing, the GPI-anchor is attached to the protein in the endoplasmic reticulum and serves to target the protein to the cell surface. There, the glucosamine-inositol phospholipid moiety is cleaved off and the GPI-modified mannoprotein is covalently attached via its lipidless GPI glycan remnant to the 1,6-beta-glucan of the outer cell wall layer. Post-translationally, covalently linked to beta-1,3-glucan of the inner cell wall layer via an alkali-sensitive ester linkage between the gamma-carboxyl group of glutamic acids, arising from a specific glutamine within the PIR1/2/3 repeat, and hydroxyl groups of glucoses of beta-1,3-glucan chains.

It is found in the secreted. The protein localises to the cell wall. The protein resides in the membrane. In terms of biological role, component of the cell wall. In Saccharomyces cerevisiae (strain ATCC 204508 / S288c) (Baker's yeast), this protein is Cold shock-induced protein TIR2 (TIR2).